The primary structure comprises 307 residues: PCP degradation transcriptional activation protein (307 aa).

The 58-residue stretch at 6-63 folds into the HTH lysR-type domain; that stretch reads LPLGHLMVFDALYRHGSAGKAAHALSMPQPTLSRWLAQLRTHFDDPLFVRTRSGMEPT. Residues 23-42 constitute a DNA-binding region (H-T-H motif); sequence AGKAAHALSMPQPTLSRWLA.

The protein belongs to the LysR transcriptional regulatory family.

In terms of biological role, transcriptional activator for the pcpA, pcpB and pcpE genes for pentachlorophenol (PCP) degradation. Essential for PCP degradation. The chain is PCP degradation transcriptional activation protein (pcpR) from Sphingobium chlorophenolicum.